An 849-amino-acid chain; its full sequence is Putative pentatricopeptide repeat-containing protein At5g08490 (849 aa).

20 PPR repeats span residues D20 to A54, C55 to V89, S121 to K155, D156 to K187, D188 to P222, N223 to Q260, H262 to S296, W297 to S327, D329 to L363, D365 to S399, W400 to L430, D431 to H465, E469 to R499, T501 to T531, D532 to P566, N567 to G597, D601 to R631, D632 to P666, D667 to P702, and T703 to E733. Residues I738–D813 form a type E motif region. Residues G814–K844 are type E(+) motif.

This sequence belongs to the PPR family. PCMP-E subfamily.

The polypeptide is Putative pentatricopeptide repeat-containing protein At5g08490 (PCMP-E32) (Arabidopsis thaliana (Mouse-ear cress)).